The chain runs to 556 residues: Glutamine--tRNA ligase (556 aa).

A 'HIGH' region motif is present at residues 35 to 45; that stretch reads PEPNGYLHIGH. Residues 36-38 and 42-48 each bind ATP; these read EPN and HIGHAKS. Residues Asp-68 and Tyr-213 each coordinate L-glutamine. ATP-binding positions include Thr-232 and 262 to 263; that span reads RL. The 'KMSKS' region signature appears at 269 to 273; it reads VTSKR.

The protein belongs to the class-I aminoacyl-tRNA synthetase family. Monomer.

It localises to the cytoplasm. It catalyses the reaction tRNA(Gln) + L-glutamine + ATP = L-glutaminyl-tRNA(Gln) + AMP + diphosphate. This chain is Glutamine--tRNA ligase, found in Pseudomonas aeruginosa (strain LESB58).